Consider the following 1938-residue polypeptide: Myosin-6 (1938 aa).

The Myosin N-terminal SH3-like domain occupies 31–80 (DIRTECFVPDDKEEYVKAKIVSREGGKVTAETENGKTVTVKEDQVMQQNP). The Myosin motor domain occupies 84–779 (DKIEDMAMLT…LLGLLEEMRD (696 aa)). Lysine 128 bears the N6,N6,N6-trimethyllysine mark. 177 to 184 (GESGAGKT) contacts ATP. Phosphothreonine is present on threonine 378. Serine 416 bears the Phosphoserine mark. Actin-binding regions lie at residues 656–678 (LNKLMTNLRTTHPHFVRCIIPNE) and 758–772 (KFGHTKVFFKAGLLG). One can recognise an IQ domain in the interval 782 to 811 (LSRIITRIQAQARGQLMRIEFKKMVERRDA). 2 calmodulin-binding regions span residues 789-806 (IQAQARGQLMRIEFKKMV) and 815-832 (IQWNIRAFMGVKNWPWMK). Positions 842–1938 (KSAETEKEMA…GAKQKMHDEE (1097 aa)) form a coiled coil. Serine 1089 and serine 1138 each carry phosphoserine. A Phosphotyrosine modification is found at tyrosine 1260. Serine 1270 is modified (phosphoserine). Phosphothreonine occurs at positions 1276 and 1283. Serine 1308 bears the Phosphoserine mark. Tyrosine 1309 is modified (phosphotyrosine). Residue threonine 1310 is modified to Phosphothreonine. Serine 1511 bears the Phosphoserine mark. Residues threonine 1514 and threonine 1680 each carry the phosphothreonine modification. Residues 1907 to 1938 (AEERADIAESQVNKLRAKSRDIGAKQKMHDEE) are disordered. A compositionally biased stretch (basic and acidic residues) spans 1924–1938 (KSRDIGAKQKMHDEE).

It belongs to the TRAFAC class myosin-kinesin ATPase superfamily. Myosin family. In terms of assembly, muscle myosin is a hexameric protein that consists of 2 heavy chain subunits (MHC), 2 alkali light chain subunits (MLC) and 2 regulatory light chain subunits (MLC-2).

Its subcellular location is the cytoplasm. The protein localises to the myofibril. Functionally, muscle contraction. The chain is Myosin-6 (Myh6) from Rattus norvegicus (Rat).